Consider the following 459-residue polypeptide: Cysteine--tRNA ligase (459 aa).

Residue cysteine 29 participates in Zn(2+) binding. Positions 31-41 (MTVYDLCHLGH) match the 'HIGH' region motif. Positions 213, 238, and 242 each coordinate Zn(2+). The 'KMSKS' region signature appears at 270 to 274 (KMSKS). Lysine 273 contributes to the ATP binding site.

This sequence belongs to the class-I aminoacyl-tRNA synthetase family. In terms of assembly, monomer. It depends on Zn(2+) as a cofactor.

Its subcellular location is the cytoplasm. It carries out the reaction tRNA(Cys) + L-cysteine + ATP = L-cysteinyl-tRNA(Cys) + AMP + diphosphate. The sequence is that of Cysteine--tRNA ligase from Albidiferax ferrireducens (strain ATCC BAA-621 / DSM 15236 / T118) (Rhodoferax ferrireducens).